Here is a 171-residue protein sequence, read N- to C-terminus: Co-chaperone protein HscB (171 aa).

The J domain maps to 2–74; that stretch reads DYFTLFGLPA…LTRAEYLLSL (73 aa).

This sequence belongs to the HscB family. As to quaternary structure, interacts with HscA and stimulates its ATPase activity. Interacts with IscU.

Functionally, co-chaperone involved in the maturation of iron-sulfur cluster-containing proteins. Seems to help targeting proteins to be folded toward HscA. The chain is Co-chaperone protein HscB from Citrobacter koseri (strain ATCC BAA-895 / CDC 4225-83 / SGSC4696).